A 205-amino-acid polypeptide reads, in one-letter code: Holliday junction branch migration complex subunit RuvA (205 aa).

A domain I region spans residues 1-64 (MIGKLKGVVD…EDQIRLFGFS (64 aa)). Positions 65–143 (SAAERDWFRL…GFSASEPLAA (79 aa)) are domain II. The flexible linker stretch occupies residues 144–152 (QLGGGGVAS). The interval 153-205 (AQGGAAADAVSALVNLGYGVPQANAAIAAALRGAGEGAKTEVLIRLGLKELAK) is domain III.

This sequence belongs to the RuvA family. Homotetramer. Forms an RuvA(8)-RuvB(12)-Holliday junction (HJ) complex. HJ DNA is sandwiched between 2 RuvA tetramers; dsDNA enters through RuvA and exits via RuvB. An RuvB hexamer assembles on each DNA strand where it exits the tetramer. Each RuvB hexamer is contacted by two RuvA subunits (via domain III) on 2 adjacent RuvB subunits; this complex drives branch migration. In the full resolvosome a probable DNA-RuvA(4)-RuvB(12)-RuvC(2) complex forms which resolves the HJ.

The protein resides in the cytoplasm. Its function is as follows. The RuvA-RuvB-RuvC complex processes Holliday junction (HJ) DNA during genetic recombination and DNA repair, while the RuvA-RuvB complex plays an important role in the rescue of blocked DNA replication forks via replication fork reversal (RFR). RuvA specifically binds to HJ cruciform DNA, conferring on it an open structure. The RuvB hexamer acts as an ATP-dependent pump, pulling dsDNA into and through the RuvAB complex. HJ branch migration allows RuvC to scan DNA until it finds its consensus sequence, where it cleaves and resolves the cruciform DNA. This chain is Holliday junction branch migration complex subunit RuvA, found in Xanthobacter autotrophicus (strain ATCC BAA-1158 / Py2).